The primary structure comprises 197 residues: Segregation and condensation protein B (197 aa).

The protein belongs to the ScpB family. As to quaternary structure, homodimer. Homodimerization may be required to stabilize the binding of ScpA to the Smc head domains. Component of a cohesin-like complex composed of ScpA, ScpB and the Smc homodimer, in which ScpA and ScpB bind to the head domain of Smc. The presence of the three proteins is required for the association of the complex with DNA.

The protein resides in the cytoplasm. In terms of biological role, participates in chromosomal partition during cell division. May act via the formation of a condensin-like complex containing Smc and ScpA that pull DNA away from mid-cell into both cell halves. This chain is Segregation and condensation protein B, found in Bacillus licheniformis (strain ATCC 14580 / DSM 13 / JCM 2505 / CCUG 7422 / NBRC 12200 / NCIMB 9375 / NCTC 10341 / NRRL NRS-1264 / Gibson 46).